A 440-amino-acid polypeptide reads, in one-letter code: Chromosome partition protein MukF (440 aa).

Residues 208–236 (LSETSGTLRELQDTLEAAGDKLQANLLRI) are leucine-zipper.

It belongs to the MukF family. In terms of assembly, interacts, and probably forms a ternary complex, with MukE and MukB via its C-terminal region. The complex formation is stimulated by calcium or magnesium. It is required for an interaction between MukE and MukB.

Its subcellular location is the cytoplasm. The protein localises to the nucleoid. Functionally, involved in chromosome condensation, segregation and cell cycle progression. May participate in facilitating chromosome segregation by condensation DNA from both sides of a centrally located replisome during cell division. Not required for mini-F plasmid partitioning. Probably acts via its interaction with MukB and MukE. Overexpression results in anucleate cells. It has a calcium binding activity. The chain is Chromosome partition protein MukF from Shigella boydii serotype 18 (strain CDC 3083-94 / BS512).